A 323-amino-acid chain; its full sequence is Cysteine synthase A (323 aa).

2 residues coordinate hydrogen sulfide: Asn8 and Arg35. Lys42 is subject to N6-(pyridoxal phosphate)lysine. Residues Asn72 and 177 to 181 each bind pyridoxal 5'-phosphate; that span reads GTGGT. Leu269 is a hydrogen sulfide binding site. Ser273 is a pyridoxal 5'-phosphate binding site.

The protein belongs to the cysteine synthase/cystathionine beta-synthase family. In terms of assembly, homodimer. Requires pyridoxal 5'-phosphate as cofactor.

The catalysed reaction is O-acetyl-L-serine + hydrogen sulfide = L-cysteine + acetate. It functions in the pathway amino-acid biosynthesis; L-cysteine biosynthesis; L-cysteine from L-serine: step 2/2. The polypeptide is Cysteine synthase A (cysK) (Escherichia coli O157:H7).